The chain runs to 132 residues: MFFNFLIPPNSFSSFPEYVAFVVSLSYALNATLLLLYSRIFGVEVKEKAFIPVTLSFVAIDFTSIQGLRLFVGIPAYLGVVILTSLCILEGLALALTSSLALVNASRRHLAATWIAANVASSGLFMAFVGVS.

The next 4 helical transmembrane spans lie at 15-37, 49-71, 81-103, and 110-129; these read FPEY…LLLY, AFIP…LRLF, VILT…LALV, and LAAT…MAFV.

Its subcellular location is the cell membrane. This is an uncharacterized protein from Archaeoglobus fulgidus (strain ATCC 49558 / DSM 4304 / JCM 9628 / NBRC 100126 / VC-16).